The following is a 249-amino-acid chain: MDGKKCSVWMFLPLVFTLFTSAGLWIVYFIAVEDDKILPLNSAERKPGVKHAPYISIAGDDPPASCVFSQVMNMAAFLALVVAVLRFIQLKPKVLNPWLNISGLVALCLASFGMTLLGNFQLTNDEEIHNVGTSLTFGFGTLTCWIQAALTLKVNIKNEGRRVGIPRVILSASITLCVVLYFILMAQSIHMYAARVQWGLVMCFLSYFGTFAVEFRHYRYEIVCSEYQENFLSFSESLSEASEYQTDQV.

Residues 1–9 are Cytoplasmic-facing; sequence MDGKKCSVW. Residues 10 to 30 form a helical membrane-spanning segment; sequence MFLPLVFTLFTSAGLWIVYFI. The Extracellular portion of the chain corresponds to 31 to 64; it reads AVEDDKILPLNSAERKPGVKHAPYISIAGDDPPA. A helical transmembrane segment spans residues 65–85; that stretch reads SCVFSQVMNMAAFLALVVAVL. Topologically, residues 86 to 97 are cytoplasmic; it reads RFIQLKPKVLNP. The chain crosses the membrane as a helical span at residues 98–118; the sequence is WLNISGLVALCLASFGMTLLG. At 119–130 the chain is on the extracellular side; the sequence is NFQLTNDEEIHN. A helical transmembrane segment spans residues 131 to 151; sequence VGTSLTFGFGTLTCWIQAALT. Over 152-168 the chain is Cytoplasmic; the sequence is LKVNIKNEGRRVGIPRV. The chain crosses the membrane as a helical span at residues 169–189; the sequence is ILSASITLCVVLYFILMAQSI. Over 190-192 the chain is Extracellular; it reads HMY. Residues 193–213 form a helical membrane-spanning segment; that stretch reads AARVQWGLVMCFLSYFGTFAV. Over 214–249 the chain is Cytoplasmic; that stretch reads EFRHYRYEIVCSEYQENFLSFSESLSEASEYQTDQV.

Belongs to the DRAM/TMEM150 family.

It localises to the cell membrane. The protein resides in the lysosome membrane. It catalyses the reaction Ca(2+)(in) = Ca(2+)(out). It carries out the reaction Na(+)(in) = Na(+)(out). The catalysed reaction is K(+)(in) = K(+)(out). The enzyme catalyses Mg(2+)(in) = Mg(2+)(out). Its function is as follows. Nonselective cationic channel with high permeability to Ca(2+). Component of a mechanosensitive cation channel, confers mechanically activated (MA) currents with slow inactivation kinetics. May contribute to proprioception. The sequence is that of Transmembrane protein 150C from Homo sapiens (Human).